The primary structure comprises 317 residues: Apolipoprotein E (317 aa).

Residues 1 to 18 (MKVLWAALLVTFLAGCQA) form the signal peptide. 8 repeat units span residues 80–101 (ALMDETMKELKAYKSELEEQLT), 102–123 (PVAEETRARLSKELQAAQARLG), 124–145 (ADMEDVRGRLVQYRGEVQAMLG), 146–167 (QSTEELRARLASHLRKLRKRLL), 168–189 (RDADDLQKRLAVYQAGAREGAE), 190–211 (RGVSAIRERLGPLVEQGRVRAA), 212–233 (TVGSLAGQPLQERAQAWGERLR), and 234–255 (ARMEEMGSRTRDRLDEVKEQVA). The segment at 80–255 (ALMDETMKEL…RLDEVKEQVA (176 aa)) is 8 X 22 AA approximate tandem repeats. Position 143 is a methionine sulfoxide (Met-143). Phosphoserine is present on Ser-147. An LDL and other lipoprotein receptors binding region spans residues 158–168 (HLRKLRKRLLR). 162–165 (LRKR) lines the heparin pocket. Positions 210-290 (AATVGSLAGQ…SWFEPLVEDM (81 aa)) are lipid-binding and lipoprotein association. 229 to 236 (GERLRARM) provides a ligand contact to heparin. Positions 266–317 (QQIRLQAEAFQARLKSWFEPLVEDMQRQWAGLVEKVQAAMGTSAAPVPSDNH) are homooligomerization. The interval 278 to 290 (RLKSWFEPLVEDM) is specificity for association with VLDL.

It belongs to the apolipoprotein A1/A4/E family. As to quaternary structure, homotetramer. May interact with ABCA1; functionally associated with ABCA1 in the biogenesis of HDLs. May interact with APP/A4 amyloid-beta peptide; the interaction is extremely stable in vitro but its physiological significance is unclear. May interact with MAPT. May interact with MAP2. In the cerebrospinal fluid, interacts with secreted SORL1. Interacts with PMEL; this allows the loading of PMEL luminal fragment on ILVs to induce fibril nucleation. APOE exists as multiple glycosylated and sialylated glycoforms within cells and in plasma. The extent of glycosylation and sialylation are tissue and context specific. Post-translationally, glycated in plasma VLDL. In terms of processing, phosphorylated by FAM20C in the extracellular medium.

Its subcellular location is the secreted. It localises to the extracellular space. The protein localises to the extracellular matrix. The protein resides in the extracellular vesicle. It is found in the endosome. Its subcellular location is the multivesicular body. APOE is an apolipoprotein, a protein associating with lipid particles, that mainly functions in lipoprotein-mediated lipid transport between organs via the plasma and interstitial fluids. APOE is a core component of plasma lipoproteins and is involved in their production, conversion and clearance. Apolipoproteins are amphipathic molecules that interact both with lipids of the lipoprotein particle core and the aqueous environment of the plasma. As such, APOE associates with chylomicrons, chylomicron remnants, very low density lipoproteins (VLDL) and intermediate density lipoproteins (IDL) but shows a preferential binding to high-density lipoproteins (HDL). It also binds a wide range of cellular receptors including the LDL receptor/LDLR, the LDL receptor-related proteins LRP1, LRP2 and LRP8 and the very low-density lipoprotein receptor/VLDLR that mediate the cellular uptake of the APOE-containing lipoprotein particles. Finally, APOE also has a heparin-binding activity and binds heparan-sulfate proteoglycans on the surface of cells, a property that supports the capture and the receptor-mediated uptake of APOE-containing lipoproteins by cells. A main function of APOE is to mediate lipoprotein clearance through the uptake of chylomicrons, VLDLs, and HDLs by hepatocytes. APOE is also involved in the biosynthesis by the liver of VLDLs as well as their uptake by peripheral tissues ensuring the delivery of triglycerides and energy storage in muscle, heart and adipose tissues. By participating in the lipoprotein-mediated distribution of lipids among tissues, APOE plays a critical role in plasma and tissues lipid homeostasis. APOE is also involved in two steps of reverse cholesterol transport, the HDLs-mediated transport of cholesterol from peripheral tissues to the liver, and thereby plays an important role in cholesterol homeostasis. First, it is functionally associated with ABCA1 in the biogenesis of HDLs in tissues. Second, it is enriched in circulating HDLs and mediates their uptake by hepatocytes. APOE also plays an important role in lipid transport in the central nervous system, regulating neuron survival and sprouting. The sequence is that of Apolipoprotein E (APOE) from Pan troglodytes (Chimpanzee).